Consider the following 247-residue polypeptide: UPF0246 protein LAF_1150 (247 aa).

It belongs to the UPF0246 family.

The protein is UPF0246 protein LAF_1150 of Limosilactobacillus fermentum (strain NBRC 3956 / LMG 18251) (Lactobacillus fermentum).